A 142-amino-acid chain; its full sequence is Acidic phospholipase A2 PA4 (142 aa).

Ca(2+)-binding residues include Trp-10, Gly-12, and Gly-14. 3 disulfides stabilise this stretch: Cys-11-Cys-33, Cys-32-Cys-72, and Cys-39-Cys-65. The active site involves His-36. Asp-37 contacts Ca(2+).

This sequence belongs to the phospholipase A2 family. Group III subfamily. It depends on Ca(2+) as a cofactor. As to expression, expressed by the venom gland.

The protein resides in the secreted. It carries out the reaction a 1,2-diacyl-sn-glycero-3-phosphocholine + H2O = a 1-acyl-sn-glycero-3-phosphocholine + a fatty acid + H(+). Its function is as follows. PLA2 catalyzes the calcium-dependent hydrolysis of the 2-acyl groups in 3-sn-phosphoglycerides. The sequence is that of Acidic phospholipase A2 PA4 from Heloderma suspectum (Gila monster).